A 925-amino-acid polypeptide reads, in one-letter code: Serine/threonine-protein kinase PLK4 (925 aa).

In terms of domain architecture, Protein kinase spans 12–265 (FKVGNLLGKG…LSSVLDHPFM (254 aa)). Residues 18 to 26 (LGKGSFAGV) and Lys-41 contribute to the ATP site. N6-acetyllysine is present on residues Lys-45 and Lys-46. The active-site Proton acceptor is the Asp-136. Disordered stretches follow at residues 262-283 (HPFM…EDSM) and 328-394 (KNSS…KTYS). Positions 330–341 (SSDFSSGDGSNF) are enriched in low complexity. Residues 342 to 353 (CTQWGNPEQEAN) are compositionally biased toward polar residues. Basic and acidic residues predominate over residues 359-369 (RVIEDAEERPH). Residues 381–391 (RASPSNQSRAK) show a composition bias toward polar residues. Residue Ser-400 is modified to Phosphoserine. Residues 517-538 (EVMPQEPGLHPHSEQSKNRSME) form a disordered region. Positions 525-536 (LHPHSEQSKNRS) are enriched in basic and acidic residues. In terms of domain architecture, Cryptic POLO box 1 (CPB1) spans 547–660 (TLRSITSPLI…SRFIQLVRSK (114 aa)). A Cryptic POLO box 2 (CPB2) domain is found at 661-774 (TPKITYFTRY…GRKPGNTSSP (114 aa)). The residue at position 778 (Ser-778) is a Phosphoserine. The 79-residue stretch at 841-919 (QLLKSVFVKN…LSSILLMFSN (79 aa)) folds into the POLO box domain.

This sequence belongs to the protein kinase superfamily. Ser/Thr protein kinase family. CDC5/Polo subfamily. In terms of assembly, homodimer. Interacts with CEP152 (via N-terminus). Interacts with CEP78; this interaction may be important for proper PLK4 localization to the centriole and PLK4-induced overduplication of centrioles. Interacts with CEP131. Interacts simultaneously with TENT5C and CEP192. Interacts with TENT5C; this interaction leads to the TENT5C recruitment in the centrosome. Interacts with CEP85; this interaction may be important in cell migration and centriole assembly. Ubiquitinated; leading to its degradation by the proteasome. Deubiquitinated by USP54; leading to PLK4 stabilization. In terms of processing, tyrosine-phosphorylated by TEC. Post-translationally, acetylation by KAT2A and KAT2B impairs kinase activity by shifting the kinase to an inactive conformation. In terms of tissue distribution, expressed in tissues associated with mitotic and meiotic cell division. Highly expressed in testis.

The protein resides in the cytoplasm. It localises to the cytoskeleton. Its subcellular location is the microtubule organizing center. It is found in the centrosome. The protein localises to the centriole. The protein resides in the nucleus. It localises to the nucleolus. Its subcellular location is the cleavage furrow. The catalysed reaction is L-seryl-[protein] + ATP = O-phospho-L-seryl-[protein] + ADP + H(+). It carries out the reaction L-threonyl-[protein] + ATP = O-phospho-L-threonyl-[protein] + ADP + H(+). Functionally, serine/threonine-protein kinase that plays a central role in centriole duplication. Able to trigger procentriole formation on the surface of the parental centriole cylinder, leading to the recruitment of centriole biogenesis proteins such as SASS6, CPAP, CCP110, CEP135 and gamma-tubulin. When overexpressed, it is able to induce centrosome amplification through the simultaneous generation of multiple procentrioles adjoining each parental centriole during S phase. Phosphorylates 'Ser-151' of FBXW5 during the G1/S transition, leading to inhibit FBXW5 ability to ubiquitinate SASS6. Its central role in centriole replication suggests a possible role in tumorigenesis, centrosome aberrations being frequently observed in tumors. Phosphorylates CDC25C and CHEK2. Also involved in deuterosome-mediated centriole amplification in multiciliated that can generate more than 100 centrioles. Also involved in trophoblast differentiation by phosphorylating HAND1, leading to disrupt the interaction between HAND1 and MDFIC and activate HAND1. Required for the recruitment of STIL to the centriole and for STIL-mediated centriole amplification. Phosphorylates CEP131 at 'Ser-78' and PCM1 at 'Ser-372' which is essential for proper organization and integrity of centriolar satellites. This is Serine/threonine-protein kinase PLK4 from Mus musculus (Mouse).